The following is a 55-amino-acid chain: UPF0391 membrane protein Meso_3110 (55 aa).

A run of 2 helical transmembrane segments spans residues 4-24 (WALVFLVVAIIAGALGFGGIA) and 30-50 (IAQILFYIFLILLVVSLLFGL).

Belongs to the UPF0391 family.

It localises to the cell membrane. The polypeptide is UPF0391 membrane protein Meso_3110 (Chelativorans sp. (strain BNC1)).